Consider the following 978-residue polypeptide: Serine/threonine-protein kinase PLK4 (978 aa).

In terms of domain architecture, Protein kinase spans 13 to 266 (FQVLDLLGKG…LSGILDHPFI (254 aa)). ATP is bound by residues 19 to 27 (LGKGGFACV) and Lys-42. Catalysis depends on Asp-137, which acts as the Proton acceptor. Polar residues-rich tracts occupy residues 271 to 282 (LNTKYSSPTRQH) and 291 to 304 (SLDS…TIST). 4 disordered regions span residues 271 to 381 (LNTK…TRTS), 489 to 578 (IEQP…AERL), 788 to 818 (AWKN…SSPS), and 838 to 869 (AQTT…QPIP). Residues 324–335 (RTSDIWPRDPKH) show a composition bias toward basic and acidic residues. Polar residues-rich tracts occupy residues 351–362 (TENVTTGSSSHV) and 371–381 (AQYSGLKTRTS). Composition is skewed to basic and acidic residues over residues 518 to 527 (GSDSVSKDFD) and 536 to 566 (ESRR…DKSL). Residues 565 to 678 (SLGELTEPLN…AKFVQLVRKL (114 aa)) enclose the Cryptic POLO box 1 (CPB1) domain. In terms of domain architecture, Cryptic POLO box 2 (CPB2) spans 679-792 (TPKVTLYSKH…GRRPPAWKNS (114 aa)). Polar residues predominate over residues 801–818 (QQGCSNGQSQPVLPSSPS). Residues 848–862 (KSRKTSPSKTSRHKQ) are compositionally biased toward basic residues. One can recognise a POLO box domain in the interval 895–973 (HVCKMAFVDG…LPAVIKTLAT (79 aa)).

Belongs to the protein kinase superfamily. Ser/Thr protein kinase family. CDC5/Polo subfamily. In terms of assembly, homodimer. Post-translationally, ubiquitinated; leading to its degradation by the proteasome.

It is found in the cytoplasm. Its subcellular location is the cytoskeleton. It localises to the microtubule organizing center. The protein localises to the centrosome. The protein resides in the centriole. The catalysed reaction is L-seryl-[protein] + ATP = O-phospho-L-seryl-[protein] + ADP + H(+). It carries out the reaction L-threonyl-[protein] + ATP = O-phospho-L-threonyl-[protein] + ADP + H(+). Functionally, serine/threonine-protein kinase that plays a central role in centriole duplication. Able to trigger procentriole formation on the surface of the mother centriole cylinder, leading to the recruitment of centriole biogenesis proteins. When overexpressed, it is able to induce centrosome amplification through the simultaneous generation of multiple procentrioles adjoining each parental centriole during S phase. The protein is Serine/threonine-protein kinase PLK4 of Nematostella vectensis (Starlet sea anemone).